A 244-amino-acid chain; its full sequence is Isoprenyl transferase (244 aa).

Residue Asp-23 is part of the active site. Residue Asp-23 participates in Mg(2+) binding. Substrate is bound by residues 24 to 27 (GNGR), Trp-28, Arg-36, His-40, and 68 to 70 (STE). Catalysis depends on Asn-71, which acts as the Proton acceptor. Substrate contacts are provided by residues Trp-72, Arg-74, Arg-191, and 197–199 (RMS). Residue Glu-210 participates in Mg(2+) binding.

It belongs to the UPP synthase family. In terms of assembly, homodimer. It depends on Mg(2+) as a cofactor.

Functionally, catalyzes the condensation of isopentenyl diphosphate (IPP) with allylic pyrophosphates generating different type of terpenoids. This chain is Isoprenyl transferase, found in Lactococcus lactis subsp. lactis (strain IL1403) (Streptococcus lactis).